A 346-amino-acid polypeptide reads, in one-letter code: Biotin synthase (346 aa).

The region spanning 38–256 (RQVQVSTLLS…IAVARIMMPT (219 aa)) is the Radical SAM core domain. [4Fe-4S] cluster contacts are provided by cysteine 53, cysteine 57, and cysteine 60. The [2Fe-2S] cluster site is built by cysteine 97, cysteine 128, cysteine 188, and arginine 260.

This sequence belongs to the radical SAM superfamily. Biotin synthase family. Homodimer. It depends on [4Fe-4S] cluster as a cofactor. The cofactor is [2Fe-2S] cluster.

It carries out the reaction (4R,5S)-dethiobiotin + (sulfur carrier)-SH + 2 reduced [2Fe-2S]-[ferredoxin] + 2 S-adenosyl-L-methionine = (sulfur carrier)-H + biotin + 2 5'-deoxyadenosine + 2 L-methionine + 2 oxidized [2Fe-2S]-[ferredoxin]. The protein operates within cofactor biosynthesis; biotin biosynthesis; biotin from 7,8-diaminononanoate: step 2/2. Its function is as follows. Catalyzes the conversion of dethiobiotin (DTB) to biotin by the insertion of a sulfur atom into dethiobiotin via a radical-based mechanism. This Escherichia coli O6:K15:H31 (strain 536 / UPEC) protein is Biotin synthase.